The sequence spans 328 residues: Glycerol-3-phosphate dehydrogenase [NAD(P)+] (328 aa).

Positions 15, 35, 36, and 105 each coordinate NADPH. 2 residues coordinate sn-glycerol 3-phosphate: K105 and G131. A135 provides a ligand contact to NADPH. Residues K186, D239, S249, R250, and N251 each coordinate sn-glycerol 3-phosphate. The active-site Proton acceptor is K186. Residue R250 coordinates NADPH. Residues V270 and E272 each contribute to the NADPH site.

It belongs to the NAD-dependent glycerol-3-phosphate dehydrogenase family.

The protein resides in the cytoplasm. It carries out the reaction sn-glycerol 3-phosphate + NAD(+) = dihydroxyacetone phosphate + NADH + H(+). The enzyme catalyses sn-glycerol 3-phosphate + NADP(+) = dihydroxyacetone phosphate + NADPH + H(+). It functions in the pathway membrane lipid metabolism; glycerophospholipid metabolism. Functionally, catalyzes the reduction of the glycolytic intermediate dihydroxyacetone phosphate (DHAP) to sn-glycerol 3-phosphate (G3P), the key precursor for phospholipid synthesis. The polypeptide is Glycerol-3-phosphate dehydrogenase [NAD(P)+] (Deinococcus radiodurans (strain ATCC 13939 / DSM 20539 / JCM 16871 / CCUG 27074 / LMG 4051 / NBRC 15346 / NCIMB 9279 / VKM B-1422 / R1)).